The sequence spans 308 residues: Porphobilinogen deaminase (308 aa).

Position 240 is an S-(dipyrrolylmethanemethyl)cysteine (C240).

It belongs to the HMBS family. As to quaternary structure, monomer. Requires dipyrromethane as cofactor.

The enzyme catalyses 4 porphobilinogen + H2O = hydroxymethylbilane + 4 NH4(+). It participates in porphyrin-containing compound metabolism; protoporphyrin-IX biosynthesis; coproporphyrinogen-III from 5-aminolevulinate: step 2/4. Functionally, tetrapolymerization of the monopyrrole PBG into the hydroxymethylbilane pre-uroporphyrinogen in several discrete steps. This chain is Porphobilinogen deaminase, found in Desulfitobacterium hafniense (strain DSM 10664 / DCB-2).